Consider the following 418-residue polypeptide: BTB and MATH domain-containing protein 41 (418 aa).

A disordered region spans residues 1–33; it reads MEINNGAQPENAAVSIPSRSPSGKSEKRKSPSI. One can recognise an MATH domain in the interval 45 to 173; that stretch reads SFTNYWSVER…NDILTIGCEL (129 aa). The region spanning 232-293 is the BTB domain; sequence SDFIIVASCG…TLDVLLRHMY (62 aa).

As to quaternary structure, interacts with cul-3.

Its pathway is protein modification; protein ubiquitination. Its function is as follows. Probable substrate-specific adapter of an E3 ubiquitin-protein ligase complex which mediates the ubiquitination and subsequent proteasomal degradation of target proteins. The sequence is that of BTB and MATH domain-containing protein 41 (bath-41) from Caenorhabditis elegans.